The chain runs to 130 residues: uncharacterized protein (130 aa).

This is an uncharacterized protein from Sulfolobus islandicus filamentous virus (isolate Iceland/Hveragerdi) (SIFV).